The sequence spans 235 residues: Glycerol-3-phosphate acyltransferase (235 aa).

6 helical membrane-spanning segments follow: residues 4–24 (LLAI…IMAG), 56–76 (TVTL…VAFF), 94–114 (LLAG…GFKG), 124–144 (MLIG…LLTI), 152–172 (VASM…KYIF), and 191–211 (FHDS…LGIL).

The protein belongs to the PlsY family. Probably interacts with PlsX.

The protein resides in the cell inner membrane. It catalyses the reaction an acyl phosphate + sn-glycerol 3-phosphate = a 1-acyl-sn-glycero-3-phosphate + phosphate. The protein operates within lipid metabolism; phospholipid metabolism. Catalyzes the transfer of an acyl group from acyl-phosphate (acyl-PO(4)) to glycerol-3-phosphate (G3P) to form lysophosphatidic acid (LPA). This enzyme utilizes acyl-phosphate as fatty acyl donor, but not acyl-CoA or acyl-ACP. The protein is Glycerol-3-phosphate acyltransferase of Chlorobium limicola (strain DSM 245 / NBRC 103803 / 6330).